A 529-amino-acid chain; its full sequence is [Pyruvate dehydrogenase [acetyl-transferring]]-phosphatase 2, mitochondrial (529 aa).

Residues 1–66 (MSSTVSYWIL…FTLCKAYRHT (66 aa)) constitute a mitochondrion transit peptide. The region spanning 106 to 517 (VLRFESNQLA…DDITVTVVYF (412 aa)) is the PPM-type phosphatase domain. The Mn(2+) site is built by Asp141, Gly142, Asp412, and Asp508.

It belongs to the PP2C family. Requires Mg(2+) as cofactor.

The protein resides in the mitochondrion. It carries out the reaction O-phospho-L-seryl-[pyruvate dehydrogenase E1 alpha subunit] + H2O = L-seryl-[pyruvate dehydrogenase E1 alpha subunit] + phosphate. In terms of biological role, mitochondrial enzyme that catalyzes the dephosphorylation and concomitant reactivation of the alpha subunit of the E1 component of the pyruvate dehydrogenase complex (PDC), thereby stimulating the conversion of pyruvate into acetyl-CoA. Acts as a crucial regulator of T cell metabolism and function, with a particular focus on T-helper Th17. The protein is [Pyruvate dehydrogenase [acetyl-transferring]]-phosphatase 2, mitochondrial of Homo sapiens (Human).